Reading from the N-terminus, the 491-residue chain is 3-octaprenyl-4-hydroxybenzoate carboxy-lyase (491 aa).

Asn-172 provides a ligand contact to Mn(2+). Prenylated FMN-binding positions include 175–177 (IYR), 189–191 (RWL), and 194–195 (RG). Glu-238 is a binding site for Mn(2+). The Proton donor role is filled by Asp-287.

It belongs to the UbiD family. Homohexamer. Prenylated FMN is required as a cofactor. Requires Mn(2+) as cofactor.

Its subcellular location is the cell membrane. The enzyme catalyses a 4-hydroxy-3-(all-trans-polyprenyl)benzoate + H(+) = a 2-(all-trans-polyprenyl)phenol + CO2. It participates in cofactor biosynthesis; ubiquinone biosynthesis. Its function is as follows. Catalyzes the decarboxylation of 3-octaprenyl-4-hydroxy benzoate to 2-octaprenylphenol, an intermediate step in ubiquinone biosynthesis. In Klebsiella pneumoniae subsp. pneumoniae (strain ATCC 700721 / MGH 78578), this protein is 3-octaprenyl-4-hydroxybenzoate carboxy-lyase.